We begin with the raw amino-acid sequence, 278 residues long: Probable cytochrome c oxidase subunit 3 (278 aa).

The next 6 membrane-spanning stretches (helical) occupy residues 21–41 (PWPV…VSFM), 46–66 (FNIY…YSWW), 89–109 (IGMA…FASF), 174–194 (CVTA…MQAY), 212–232 (FYLA…FLIV), and 256–276 (AWYW…VYIF).

The protein belongs to the cytochrome c oxidase subunit 3 family.

The protein localises to the cell membrane. It carries out the reaction 4 Fe(II)-[cytochrome c] + O2 + 8 H(+)(in) = 4 Fe(III)-[cytochrome c] + 2 H2O + 4 H(+)(out). The chain is Probable cytochrome c oxidase subunit 3 (ctaE) from Rickettsia felis (strain ATCC VR-1525 / URRWXCal2) (Rickettsia azadi).